A 107-amino-acid chain; its full sequence is Large ribosomal subunit protein uL24 (107 aa).

It belongs to the universal ribosomal protein uL24 family. In terms of assembly, part of the 50S ribosomal subunit.

Functionally, one of two assembly initiator proteins, it binds directly to the 5'-end of the 23S rRNA, where it nucleates assembly of the 50S subunit. One of the proteins that surrounds the polypeptide exit tunnel on the outside of the subunit. In Streptomyces coelicolor (strain ATCC BAA-471 / A3(2) / M145), this protein is Large ribosomal subunit protein uL24.